A 514-amino-acid chain; its full sequence is Probable WRKY transcription factor 4 (514 aa).

Disordered stretches follow at residues 1–28 (MSEK…PPRP), 175–204 (QPQT…PLPA), and 278–394 (YKGQ…TVTE). Composition is skewed to polar residues over residues 185-198 (QVQS…QIPT) and 286-299 (PPQN…DNTA). A DNA-binding region (WRKY 1) is located at residues 223-287 (NVDKPADDGY…YKGQHNHEPP (65 aa)). Residues 300–313 (NINGSSINNNRGSS) show a composition bias toward low complexity. Residues 315–326 (LGASQFQTNSSN) are compositionally biased toward polar residues. Positions 359 to 380 (TDVREKDENEPDPKRRSTEVRI) are enriched in basic and acidic residues. The segment at residues 403–468 (SEVDLLDDGY…YEGKHNHDLP (66 aa)) is a DNA-binding region (WRKY 2). Cysteine 434, threonine 436, cysteine 439, histidine 463, and histidine 465 together coordinate Zn(2+). The tract at residues 464–514 (NHDLPAAKSSSHAAAAAQLRPDNRPGGLANLNQQQQQQPVARLRLKEEQTT) is disordered. Positions 469–480 (AAKSSSHAAAAA) are enriched in low complexity.

As to expression, in young, mature and senescent leaves.

It is found in the nucleus. In terms of biological role, transcription factor that binds specifically to the W box (5'-(T)TGAC[CT]-3'), a frequently occurring elicitor-responsive cis-acting element. Has a positive role in resistance to necrotrophic pathogens (e.g. Botrytis cinerea), but a negative effect on plant resistance to biotrophic pathogens (e.g. Pseudomonas syringae). This chain is Probable WRKY transcription factor 4 (WRKY4), found in Arabidopsis thaliana (Mouse-ear cress).